A 449-amino-acid chain; its full sequence is METRGRRPAALQHQQDQPQAHPGQRAARSAPLHRDPDYADEDPAPVERHDPGPSGRAPTTAVQRKPPQPAKRGDMLDRDAVEQVTELWDRLELLGQTLKSMPTADGLKPLKNFASLQELLSLGGERLLADLVRENMRVRDMLNEVAPLLRDDGSCSSLNYQLHPVIGVIYGPTGCGKSQLLRNLLSSQLISPTPETVFFIAPQVDMIPPSELKAWEMQICEGNYAPGPDGTIIPQSGTLRPRFVKMAYDDLILEHNYDVSDPRNIFAQAAARGPIAIIMDECMENLGGHKGVSKFFHAFPSKLHDKFPKCTGYTVLVVLHNMNPRRDMAGNIANLKIQSKMHLISPRMHPSQLNRFVNTYTKGLPLAISLLLKDIFRHHAQRSCYDWIIYNTTPQHEALQWCYLHPRDGLMPMYLNIQSHLYHVLEKIHRTLNDRDRWSRAYRARKTPK.

The disordered stretch occupies residues 1–78 (METRGRRPAA…PAKRGDMLDR (78 aa)). 171 to 178 (GPTGCGKS) is a binding site for ATP. Residues 440 to 449 (RAYRARKTPK) are DNA-binding.

Belongs to the adenoviridae packaging protein 1 family. Homodimer. Part of a genome packaging complex composed of packaging proteins 1, 2 and 3; this complex specifically binds to the packaging sequence on the left end of viral genomic DNA and performs packaging of the viral genome. Interacts with protein 33K.

It is found in the virion. It localises to the host nucleus. The protein resides in the host nucleoplasm. The protein localises to the host nucleolus. Its function is as follows. Component of the packaging machinery which encapsidates the viral DNA into preformed capsids and transcriptional activator of the viral major late promoter (MLP). Binds, along with packaging proteins 2 and 3, to the specific packaging sequence on the left end of viral genomic DNA and displays ATPase activity thereby providing the power stroke of the packaging machinery. The activity of packaging protein IVa2 is stimulated by protein 33K which acts as a terminase. May be the protein that pumps DNA into the capsid powered by ATP hydrolysis. Specifically binds to the 5'-CG-3' nucleotides of the repeats making up the packaging sequence. Component of the DEF-A and DEF-B transcription factors that bind downstream elements of the major late promoter (MLP), and stimulate transcription from the MLP after initiation of viral DNA replication. DEF-A is a heterodimer packaging proteins 1 and 2 and DEF-B is a homodimer of packaging protein 1. The sequence is that of Packaging protein 1 from Human adenovirus C serotype 5 (HAdV-5).